A 1333-amino-acid chain; its full sequence is DNA-directed RNA polymerase subunit beta' (1333 aa).

Zn(2+) is bound by residues C60, C62, C75, and C78. The Mg(2+) site is built by D535, D537, and D539. C901, C983, C990, and C993 together coordinate Zn(2+).

This sequence belongs to the RNA polymerase beta' chain family. The RNAP catalytic core consists of 2 alpha, 1 beta, 1 beta' and 1 omega subunit. When a sigma factor is associated with the core the holoenzyme is formed, which can initiate transcription. Requires Mg(2+) as cofactor. The cofactor is Zn(2+).

The enzyme catalyses RNA(n) + a ribonucleoside 5'-triphosphate = RNA(n+1) + diphosphate. In terms of biological role, DNA-dependent RNA polymerase catalyzes the transcription of DNA into RNA using the four ribonucleoside triphosphates as substrates. The protein is DNA-directed RNA polymerase subunit beta' of Corynebacterium glutamicum (strain R).